Consider the following 129-residue polypeptide: Protein NrdI (129 aa).

Belongs to the NrdI family.

In terms of biological role, probably involved in ribonucleotide reductase function. The chain is Protein NrdI from Macrococcus caseolyticus (strain JCSC5402) (Macrococcoides caseolyticum).